The following is a 154-amino-acid chain: Endoribonuclease YbeY (154 aa).

Zn(2+) contacts are provided by His-117, His-121, and His-127.

Belongs to the endoribonuclease YbeY family. It depends on Zn(2+) as a cofactor.

Its subcellular location is the cytoplasm. Functionally, single strand-specific metallo-endoribonuclease involved in late-stage 70S ribosome quality control and in maturation of the 3' terminus of the 16S rRNA. The sequence is that of Endoribonuclease YbeY from Aromatoleum aromaticum (strain DSM 19018 / LMG 30748 / EbN1) (Azoarcus sp. (strain EbN1)).